A 724-amino-acid chain; its full sequence is Solute carrier organic anion transporter family member 4C1 (724 aa).

Residues 1 to 80 (MQGSKGVENP…PPGSQLSELE (80 aa)) form a disordered region. Residues 1–101 (MQGSKGVENP…QCLQRCNNPK (101 aa)) lie on the Cytoplasmic side of the membrane. 2 positions are modified to phosphoserine: S15 and S16. Position 19 is a phosphothreonine (T19). Phosphoserine occurs at positions 24, 26, and 28. Residues 25–46 (ASPSQVEVSAVASRNQNGGSQP) show a composition bias toward polar residues. The helical transmembrane segment at 102-122 (GFLLHYCLLALTQGIVVNGLV) threads the bilayer. The Extracellular segment spans residues 123 to 141 (NISISTIEKRYEMKSSLTG). Residues 142–162 (LISSSYDISFCVLSLFVSFFG) form a helical membrane-spanning segment. The Cytoplasmic segment spans residues 163-168 (ERGHKP). A helical transmembrane segment spans residues 169–193 (RWLAFASFMIGLGALVFSLPHFFSG). The Extracellular portion of the chain corresponds to 194 to 218 (RYELGTIFEDTCLTRNSTRCASSTS). Residues 219–249 (LLSNYFYVFVLGQLLLGTGGTPLYTLGTAFI) traverse the membrane as a helical segment. At 250 to 269 (DDSVPTHKSSLYIGIGYSMS) the chain is on the cytoplasmic side. Residues 270 to 290 (ILGPAIGYVLGGQLLTMYIDV) traverse the membrane as a helical segment. Topologically, residues 291–306 (AMGQSSDLTEDDPRWL) are extracellular. Residues 307–331 (GAWWIGFLLAWLFAWSLIMPFSCFP) traverse the membrane as a helical segment. At 332–376 (KHLPGTAKIQAGKTSQTHQNNSTSFQHMDENFGKSIKDFPTAVKN) the chain is on the cytoplasmic side. Residues 377–398 (LMRNTVFICLVLSTTSEALVTT) form a helical membrane-spanning segment. The Extracellular segment spans residues 399 to 418 (GFATFLPKFIENQFGLTSSF). Residues 419–442 (AATLGGAVLIPGAALGQILGGVLV) form a helical membrane-spanning segment. Residues 443-446 (SKFK) lie on the Cytoplasmic side of the membrane. Residues 447–470 (MKCKNTMKFALCTSGVALMLSFVF) traverse the membrane as a helical segment. Residues 471–580 (IYAKCENGPF…KTQCSNLPIF (110 aa)) lie on the Extracellular side of the membrane. The Kazal-like domain maps to 494-549 (GNLTAPCNANCNCLRSYYYPLCGSDGVQYFSPCFAGCLNSVSNRKPKAYYNCSCIE). Cystine bridges form between C500–C530, C506–C526, and C515–C547. A helical membrane pass occupies residues 581-603 (LGIFFITVIFTFMAGTPITVSIL). Over 604 to 612 (RCVNHRQRS) the chain is Cytoplasmic. A helical transmembrane segment spans residues 613–638 (LALGVQFMLLRLLGTIPGPIIFGVTI). Residues 639-672 (DSTCVLWDINECGTKGACWIYDNIRMAHMLVAIS) are Extracellular-facing. A helical membrane pass occupies residues 673 to 690 (VTCKVITIFFNGLAIVLY). Residues 691–724 (KPPPPGTEVSFQSQNVVVSTITVEEDLNKIENEG) lie on the Cytoplasmic side of the membrane.

Belongs to the organo anion transporter (TC 2.A.60) family. As to expression, predominantly expressed in kidney and lung but also weakly expressed in brain. Localizes primarily in the proximal straight tubules, the S3 fraction of the nephron.

The protein resides in the basolateral cell membrane. It is found in the apical cell membrane. It catalyses the reaction estrone 3-sulfate(out) = estrone 3-sulfate(in). The enzyme catalyses L-thyroxine(out) = L-thyroxine(in). It carries out the reaction 3,3',5-triiodo-L-thyronine(out) = 3,3',5-triiodo-L-thyronine(in). The catalysed reaction is chenodeoxycholate(out) = chenodeoxycholate(in). It catalyses the reaction glycocholate(out) = glycocholate(in). The enzyme catalyses L-homoarginine(in) = L-homoarginine(out). It carries out the reaction L-arginine(in) = L-arginine(out). The catalysed reaction is N(omega),N(omega)-dimethyl-L-arginine(out) = N(omega),N(omega)-dimethyl-L-arginine(in). Functionally, mediates the transport of organic anions such as steroids (estrone 3-sulfate, chenodeoxycholate, glycocholate) and thyroid hormones (3,3',5-triiodo-L-thyronine (T3), L-thyroxine (T4)), in the kidney. Capable of transporting cAMP and pharmacological substances such as digoxin, ouabain and methotrexate. Transport is independent of sodium, chloride ion, and ATP. Transport activity is stimulated by an acidic extracellular environment due to increased substrate affinity to the transporter. The driving force for this transport activity is currently not known. The role of hydrogencarbonate (HCO3(-), bicarbonate) as the probable counteranion that exchanges for organic anions is still not well defined. Functions as an uptake transporter at the apical membrane, suggesting a role in renal reabsorption. Involved in the renal secretion of the uremic toxin ADMA (N(omega),N(omega)-dimethyl-L-arginine or asymmetrical dimethylarginine), which is associated to cardiovascular events and mortality, and the structurally related amino acids L-arginine and L-homoarginine (a cardioprotective biomarker). Can act bidirectionally, suggesting a dual protective role of this transport protein; exporting L-homoarginine after being synthesized in proximal tubule cells, and mediating uptake of ADMA from the blood into proximal tubule cells where it is degraded by the enzyme dimethylarginine dimethylaminohydrolase 1 (DDAH1). May be involved in sperm maturation by enabling directed movement of organic anions and compounds within or between cells. This ion-transporting process is important to maintain the strict epididymal homeostasis necessary for sperm maturation. May have a role in secretory functions since seminal vesicle epithelial cells are assumed to secrete proteins involved in decapacitation by modifying surface proteins to facilitate the acquisition of the ability to fertilize the egg. The polypeptide is Solute carrier organic anion transporter family member 4C1 (Rattus norvegicus (Rat)).